Here is a 116-residue protein sequence, read N- to C-terminus: Large ribosomal subunit protein bL17 (116 aa).

This sequence belongs to the bacterial ribosomal protein bL17 family. In terms of assembly, part of the 50S ribosomal subunit. Contacts protein L32.

The chain is Large ribosomal subunit protein bL17 from Helicobacter pylori (strain G27).